Consider the following 584-residue polypeptide: Myo-inositol transporter 1 (584 aa).

Residues 1 to 81 are Cytoplasmic-facing; sequence MGIHIPYLTS…TSVMITFNQS (81 aa). At T12 the chain carries Phosphothreonine. The disordered stretch occupies residues 13-42; sequence SQSNVGDAVGNADSVEFNSEHDSPSKRGKI. S26, S31, S35, S37, and S46 each carry phosphoserine. Over residues 30–42 the composition is skewed to basic and acidic residues; that stretch reads NSEHDSPSKRGKI. The chain crosses the membrane as a helical span at residues 82–102; that stretch reads LSPFIITLTFVASISGFMFGY. Topologically, residues 103–129 are extracellular; it reads DTGYISSALISIGTDLDHKVLTYGEKE. The helical transmembrane segment at 130–150 threads the bilayer; it reads IVTAATSLGALITSIFAGTAA. The Cytoplasmic portion of the chain corresponds to 151–163; it reads DIFGRKRCLMGSN. The chain crosses the membrane as a helical span at residues 164-184; it reads LMFVIGAILQVSAHTFWQMAV. The Extracellular portion of the chain corresponds to 185–186; the sequence is GR. A helical membrane pass occupies residues 187–207; sequence LIMGFGVGIGSLIAPLFISEI. Over 208–215 the chain is Cytoplasmic; that stretch reads APKMIRGR. A helical membrane pass occupies residues 216-236; the sequence is LTVINSLWLTGGQLVAYGCGA. Over 237 to 246 the chain is Extracellular; that stretch reads GLNYVNNGWR. A helical transmembrane segment spans residues 247–267; it reads ILVGLSLIPTAVQFTCLCFLP. The Cytoplasmic segment spans residues 268-349; sequence DTPRYYVMKG…IGCGLQAIQQ (82 aa). Residues 350 to 370 form a helical membrane-spanning segment; sequence FTGWNSLMYFSGTIFETVGFK. N-linked (GlcNAc...) asparagine glycosylation is present at N371. At 371 to 376 the chain is on the extracellular side; sequence NSSAVS. Residues 377–397 form a helical membrane-spanning segment; it reads IIVSGTNFIFTLVAFFSIDKI. Over 398–400 the chain is Cytoplasmic; the sequence is GRR. Residues 401–421 traverse the membrane as a helical segment; it reads TILLIGLPGMTMALVVCSIAF. Residues 422–441 are Extracellular-facing; the sequence is HFLGIKFDGAVAVVVSSGFS. A helical transmembrane segment spans residues 442–462; it reads SWGIVIIVFIIVFAAFYALGI. Residues 463 to 486 lie on the Cytoplasmic side of the membrane; it reads GTVPWQQSELFPQNVRGIGTSYAT. A helical transmembrane segment spans residues 487–507; sequence ATNWAGSLVIASTFLTMLQNI. The Extracellular portion of the chain corresponds to 508–510; that stretch reads TPA. Residues 511–531 traverse the membrane as a helical segment; sequence GTFAFFAGLSCLSTIFCYFCY. The Cytoplasmic segment spans residues 532–584; that stretch reads PELSGLELEEVQTILKDGFNIKASKALAKKRKQQVARVHELKYEPTQEIIEDI. A Glycyl lysine isopeptide (Lys-Gly) (interchain with G-Cter in ubiquitin) cross-link involves residue K573.

Belongs to the major facilitator superfamily. Sugar transporter (TC 2.A.1.1) family.

It localises to the cell membrane. The enzyme catalyses myo-inositol(out) + H(+)(out) = myo-inositol(in) + H(+)(in). Its function is as follows. Major transporter for myo-inositol. This is Myo-inositol transporter 1 (ITR1) from Saccharomyces cerevisiae (strain ATCC 204508 / S288c) (Baker's yeast).